Here is a 248-residue protein sequence, read N- to C-terminus: uncharacterized protein (248 aa).

This sequence to M.jannaschii MJ1452.

This is an uncharacterized protein from Methanothermobacter thermautotrophicus (strain ATCC 29096 / DSM 1053 / JCM 10044 / NBRC 100330 / Delta H) (Methanobacterium thermoautotrophicum).